A 361-amino-acid polypeptide reads, in one-letter code: Histidinol-phosphate aminotransferase (361 aa).

The residue at position 216 (K216) is an N6-(pyridoxal phosphate)lysine.

It belongs to the class-II pyridoxal-phosphate-dependent aminotransferase family. Histidinol-phosphate aminotransferase subfamily. In terms of assembly, homodimer. Requires pyridoxal 5'-phosphate as cofactor.

It carries out the reaction L-histidinol phosphate + 2-oxoglutarate = 3-(imidazol-4-yl)-2-oxopropyl phosphate + L-glutamate. It participates in amino-acid biosynthesis; L-histidine biosynthesis; L-histidine from 5-phospho-alpha-D-ribose 1-diphosphate: step 7/9. The sequence is that of Histidinol-phosphate aminotransferase from Francisella philomiragia subsp. philomiragia (strain ATCC 25017 / CCUG 19701 / FSC 153 / O#319-036).